The primary structure comprises 352 residues: MDLLHSWGVELAVYLQTRYGKYEGLFDLASTVADLHTTFFWLFPIWFHLRRDTALRLIWVAVIGDWLNLVLKWVLFGERPYWWVHETKFYGAGPAPSLQQFPITCETGPGSPSGHAMGAAGVWYVMVTALLSIAREKQCPPLLYRFLYIGLWMLMGLVELVVCISRVYMAAHFPHQVIAGIITGTLVAEVVSKEKWIYSASLKKYFLITLFLTSFAVGFYVLLKALDVDLLWTMEKAQKWCIRPEWVHLDSAPFASLLRNMGSLFGLGLGLHSPFYKTTKMRIMSAPLRIGCIVISVSLLHLLDGWTFSPENHMTFYALSFGKSAVALLIPTTLVPWALSKIYPVKTEGKNL.

Residues 1-27 are Lumenal-facing; sequence MDLLHSWGVELAVYLQTRYGKYEGLFD. A helical transmembrane segment spans residues 28 to 48; it reads LASTVADLHTTFFWLFPIWFH. Residues 49 to 56 are Cytoplasmic-facing; it reads LRRDTALR. A helical transmembrane segment spans residues 57 to 77; it reads LIWVAVIGDWLNLVLKWVLFG. Topologically, residues 78-113 are lumenal; the sequence is ERPYWWVHETKFYGAGPAPSLQQFPITCETGPGSPS. Substrate is bound at residue Arg-79. A helical transmembrane segment spans residues 114 to 134; it reads GHAMGAAGVWYVMVTALLSIA. His-115 acts as the Proton donor in catalysis. At 135 to 141 the chain is on the cytoplasmic side; the sequence is REKQCPP. The helical transmembrane segment at 142–162 threads the bilayer; that stretch reads LLYRFLYIGLWMLMGLVELVV. At 163 to 166 the chain is on the lumenal side; that stretch reads CISR. Arg-166 is a substrate binding site. A helical transmembrane segment spans residues 167–187; the sequence is VYMAAHFPHQVIAGIITGTLV. His-172 acts as the Nucleophile in catalysis. The Cytoplasmic portion of the chain corresponds to 188-205; that stretch reads AEVVSKEKWIYSASLKKY. Residues 206-226 form a helical membrane-spanning segment; the sequence is FLITLFLTSFAVGFYVLLKAL. Over 227 to 256 the chain is Lumenal; the sequence is DVDLLWTMEKAQKWCIRPEWVHLDSAPFAS. A helical transmembrane segment spans residues 257–276; the sequence is LLRNMGSLFGLGLGLHSPFY. Residues 277–289 lie on the Cytoplasmic side of the membrane; it reads KTTKMRIMSAPLR. A helical transmembrane segment spans residues 290–310; the sequence is IGCIVISVSLLHLLDGWTFSP. Topologically, residues 311-324 are lumenal; sequence ENHMTFYALSFGKS. The chain crosses the membrane as a helical span at residues 325-345; sequence AVALLIPTTLVPWALSKIYPV. Residues 346–352 are Cytoplasmic-facing; it reads KTEGKNL. Residues 349-352 carry the Prevents secretion from ER motif; that stretch reads GKNL.

This sequence belongs to the glucose-6-phosphatase family.

It is found in the endoplasmic reticulum membrane. The enzyme catalyses D-glucose 6-phosphate + H2O = D-glucose + phosphate. The protein operates within carbohydrate biosynthesis; gluconeogenesis. Functionally, hydrolyzes glucose-6-phosphate to glucose in the endoplasmic reticulum. Forms with the glucose-6-phosphate transporter (SLC37A4/G6PT) the complex responsible for glucose production in the terminal step of glycogenolysis and gluconeogenesis. Hence, it is the key enzyme in homeostatic regulation of blood glucose levels. The protein is Glucose-6-phosphatase catalytic subunit 1 (g6pc1) of Haplochromis nubilus (Blue Victoria mouthbrooder).